The sequence spans 487 residues: Betaine aldehyde dehydrogenase 1 (487 aa).

K(+) is bound by residues serine 26, isoleucine 27, and aspartate 93. 150–152 (GAW) contacts NAD(+). Lysine 162 (charge relay system) is an active-site residue. NAD(+) is bound by residues 176–179 (KPSE) and 229–232 (SVPT). Leucine 244 contacts K(+). Glutamate 250 (proton acceptor) is an active-site residue. Positions 252, 284, and 384 each coordinate NAD(+). The active-site Nucleophile is the cysteine 284. Cysteine 284 bears the Cysteine sulfenic acid (-SOH) mark. K(+) is bound by residues lysine 454 and glycine 457. Residue glutamate 461 is the Charge relay system of the active site.

Belongs to the aldehyde dehydrogenase family. As to quaternary structure, dimer of dimers. It depends on K(+) as a cofactor.

It catalyses the reaction betaine aldehyde + NAD(+) + H2O = glycine betaine + NADH + 2 H(+). It functions in the pathway amine and polyamine biosynthesis; betaine biosynthesis via choline pathway; betaine from betaine aldehyde: step 1/1. In terms of biological role, involved in the biosynthesis of the osmoprotectant glycine betaine. Catalyzes the irreversible oxidation of betaine aldehyde to the corresponding acid. The chain is Betaine aldehyde dehydrogenase 1 from Rhizobium meliloti (strain 1021) (Ensifer meliloti).